Consider the following 192-residue polypeptide: Protein GrpE (192 aa).

Residues 1–20 (MEERNEQVVEEVKEEVKEAQ) are compositionally biased toward basic and acidic residues. The tract at residues 1–34 (MEERNEQVVEEVKEEVKEAQVEEAVTSEDSEETV) is disordered. The segment covering 25–34 (VTSEDSEETV) has biased composition (acidic residues).

It belongs to the GrpE family. As to quaternary structure, homodimer.

It localises to the cytoplasm. Participates actively in the response to hyperosmotic and heat shock by preventing the aggregation of stress-denatured proteins, in association with DnaK and GrpE. It is the nucleotide exchange factor for DnaK and may function as a thermosensor. Unfolded proteins bind initially to DnaJ; upon interaction with the DnaJ-bound protein, DnaK hydrolyzes its bound ATP, resulting in the formation of a stable complex. GrpE releases ADP from DnaK; ATP binding to DnaK triggers the release of the substrate protein, thus completing the reaction cycle. Several rounds of ATP-dependent interactions between DnaJ, DnaK and GrpE are required for fully efficient folding. This is Protein GrpE from Bacillus cereus (strain AH187).